Here is a 317-residue protein sequence, read N- to C-terminus: Small ribosomal subunit protein RACK1 (317 aa).

WD repeat units follow at residues 13 to 44 (GHSG…IMWK), 61 to 91 (GHSH…RLWD), 103 to 133 (GHTK…KLWN), 146 to 178 (SHTE…KVWN), 190 to 220 (GHTG…MLWD), 231 to 260 (DGGD…KIWD), and 281 to 311 (AEPP…RVWQ).

It belongs to the WD repeat G protein beta family. Ribosomal protein RACK1 subfamily.

The protein resides in the cytoplasm. Involved in the recruitment, assembly and/or regulation of a variety of signaling molecules. Interacts with a wide variety of proteins and plays a role in many cellular processes. Required for VANGL2 membrane localization, inhibits Wnt signaling and regulates cellular polarization and oriented cell division during gastrulation. The sequence is that of Small ribosomal subunit protein RACK1 (gnb2l1) from Danio rerio (Zebrafish).